The sequence spans 846 residues: Auxin response factor 2A (846 aa).

The span at 1 to 12 shows a compositional bias: polar residues; that stretch reads MAASEVSIQGYS. A disordered region spans residues 1 to 30; the sequence is MAASEVSIQGYSEPSDGSRPVSETGRSSSG. The TF-B3 DNA-binding region spans 146-248; it reads FCKTLTASDT…ELRVGVRRAM (103 aa). Disordered stretches follow at residues 380 to 423 and 660 to 693; these read PPAL…HSQA and DMNI…GVAA. Composition is skewed to polar residues over residues 398-408 and 414-423; these read ILPTSPDSSVL and SRATADHSQA. Residues 675 to 693 show a composition bias toward basic and acidic residues; that stretch reads SDQRSEQSKGSKVDDGVAA. The region spanning 720 to 804 is the PB1 domain; that stretch reads RSCTKVHKQG…RKIFIYTKEE (85 aa). Composition is skewed to polar residues over residues 809-824 and 836-846; these read NPGT…SSVA and QLPSESGQAES. Residues 809–846 are disordered; sequence NPGTLNSKGEDTSSVAEGSDAKEVKNLQLPSESGQAES.

Belongs to the ARF family. In terms of assembly, homodimers and heterodimers. Interacts with ASR1. In terms of tissue distribution, expressed in root, leaf and flower. Expressed in flower buds about three days before opening including ovary, petal and sepal with the highest in stamen. Expressed in stem. Expressed in fruit. Expressed in seeds.

Its subcellular location is the nucleus. Functionally, auxin response factors (ARFs) are transcriptional factors that bind specifically to the DNA sequence 5'-TGTCTC-3' found in the auxin-responsive promoter elements (AuxREs). Could act as transcriptional activator or repressor. Involved in the control of fruit ripening process. Regulates expression of a number of ripening regulators, transcription factors, and ethylene biosynthesis and signaling components. May act as a transcriptional repressor of auxin-responsive genes. Regulates vegetative growth, lateral root formation and flower organ senescence, possibly partially by regulating gene expression of auxin and ethylene response factor (ERF) genes. Plays a negative role in axillary shoot meristem formation. The chain is Auxin response factor 2A from Solanum lycopersicum (Tomato).